The primary structure comprises 624 residues: Chaperone protein HtpG (624 aa).

The interval 1-336 (MKGQETRGFQ…SSDLPLNVSR (336 aa)) is a; substrate-binding. The tract at residues 337-552 (EILQDSTVTR…ADEMSTQMAK (216 aa)) is b. The tract at residues 553–624 (LFAAAGQKVP…IRRMNQLLVS (72 aa)) is c.

This sequence belongs to the heat shock protein 90 family. In terms of assembly, homodimer.

It localises to the cytoplasm. Functionally, molecular chaperone. Has ATPase activity. The polypeptide is Chaperone protein HtpG (Shigella flexneri).